We begin with the raw amino-acid sequence, 437 residues long: Serine--tRNA ligase (437 aa).

Residue 244–246 coordinates L-serine; sequence TAE. 275 to 277 contributes to the ATP binding site; that stretch reads RSE. Glu298 serves as a coordination point for L-serine. 362–365 contacts ATP; it reads EISS. Ser397 lines the L-serine pocket.

This sequence belongs to the class-II aminoacyl-tRNA synthetase family. Type-1 seryl-tRNA synthetase subfamily. In terms of assembly, homodimer. The tRNA molecule binds across the dimer.

It is found in the cytoplasm. The enzyme catalyses tRNA(Ser) + L-serine + ATP = L-seryl-tRNA(Ser) + AMP + diphosphate + H(+). The catalysed reaction is tRNA(Sec) + L-serine + ATP = L-seryl-tRNA(Sec) + AMP + diphosphate + H(+). Its pathway is aminoacyl-tRNA biosynthesis; selenocysteinyl-tRNA(Sec) biosynthesis; L-seryl-tRNA(Sec) from L-serine and tRNA(Sec): step 1/1. Its function is as follows. Catalyzes the attachment of serine to tRNA(Ser). Is also able to aminoacylate tRNA(Sec) with serine, to form the misacylated tRNA L-seryl-tRNA(Sec), which will be further converted into selenocysteinyl-tRNA(Sec). This is Serine--tRNA ligase from Nitrosomonas europaea (strain ATCC 19718 / CIP 103999 / KCTC 2705 / NBRC 14298).